The chain runs to 289 residues: Nucleotide-binding protein FRAAL4592 (289 aa).

13–20 (GLSGAGRS) contacts ATP. Residue 64–67 (DVRG) coordinates GTP.

It belongs to the RapZ-like family.

Its function is as follows. Displays ATPase and GTPase activities. The protein is Nucleotide-binding protein FRAAL4592 of Frankia alni (strain DSM 45986 / CECT 9034 / ACN14a).